We begin with the raw amino-acid sequence, 1829 residues long: Sodium channel protein type 4 subunit alpha A (1829 aa).

The Cytoplasmic portion of the chain corresponds to M1–S124. The segment at S32 to E52 is disordered. One copy of the I repeat lies at C106–N421. The helical transmembrane segment at L125–M143 threads the bilayer. Residues S144–S150 lie on the Extracellular side of the membrane. A helical membrane pass occupies residues K151 to S171. Residues R172–P185 lie on the Cytoplasmic side of the membrane. The chain crosses the membrane as a helical span at residues W186 to V203. The Extracellular segment spans residues D204–S209. A glycan (N-linked (GlcNAc...) asparagine) is linked at N207. A helical membrane pass occupies residues A210–I226. Over P227–D245 the chain is Cytoplasmic. The helical transmembrane segment at V246–F265 threads the bilayer. Residues M266–N358 lie on the Extracellular side of the membrane. An intrachain disulfide couples C273 to C327. Residues N280, N293, and N329 are each glycosylated (N-linked (GlcNAc...) asparagine). C336 and C342 form a disulfide bridge. The pore-forming intramembrane region spans F359–L383. Residues R384–Y390 lie on the Extracellular side of the membrane. Residues M391–A411 form a helical membrane-spanning segment. At V412–P582 the chain is on the cytoplasmic side. The segment covering E446–G467 has biased composition (polar residues). The segment at E446–S468 is disordered. One copy of the II repeat lies at C564–G836. A helical membrane pass occupies residues F583–M601. Topologically, residues E602–H612 are extracellular. A helical membrane pass occupies residues V613–K632. Residues L633 to W646 lie on the Cytoplasmic side of the membrane. A helical membrane pass occupies residues N647–V666. Residues Q667–G668 lie on the Extracellular side of the membrane. Residues L669 to S686 form a helical membrane-spanning segment. The Cytoplasmic segment spans residues W687–G702. A helical membrane pass occupies residues A703–V721. Over G722–D750 the chain is Extracellular. A disulfide bond links C735 and C741. The pore-forming intramembrane region spans F751–W771. The Extracellular portion of the chain corresponds to D772–C782. A disulfide bridge connects residues C773 and C782. Residues L783–F801 form a helical membrane-spanning segment. Topologically, residues L802–Y998 are cytoplasmic. Residues S901–E957 form a disordered region. The span at D902–D916 shows a compositional bias: acidic residues. A compositionally biased stretch (polar residues) spans D923–D933. A compositionally biased stretch (acidic residues) spans P939–E957. The III repeat unit spans residues W979 to L1292. Residues F999–F1016 traverse the membrane as a helical segment. The Extracellular segment spans residues E1017–T1029. Residues I1030 to L1048 traverse the membrane as a helical segment. Topologically, residues K1049–A1062 are cytoplasmic. A helical membrane pass occupies residues W1063–N1081. At L1082–G1089 the chain is on the extracellular side. A helical transmembrane segment spans residues A1090 to R1108. Residues F1109 to S1125 lie on the Cytoplasmic side of the membrane. Residues I1126–V1145 form a helical membrane-spanning segment. Residues N1146–V1196 lie on the Extracellular side of the membrane. Cysteines 1155 and 1175 form a disulfide. 2 N-linked (GlcNAc...) asparagine glycosylation sites follow: N1157 and N1171. Residues G1197 to A1218 constitute an intramembrane region (pore-forming). Residues A1219–L1235 lie on the Extracellular side of the membrane. The chain crosses the membrane as a helical span at residues Y1236–I1257. Topologically, residues G1258–F1320 are cytoplasmic. Residues I1276–M1278 are important for rapid channel inactivation. An IV repeat occupies I1301 to Q1599. A helical membrane pass occupies residues F1321 to I1338. Topologically, residues E1339–Y1349 are extracellular. The chain crosses the membrane as a helical span at residues V1350 to L1368. Topologically, residues K1369–I1380 are cytoplasmic. The helical transmembrane segment at G1381–M1398 threads the bilayer. Residues L1399–T1411 are Extracellular-facing. The helical transmembrane segment at L1412–I1428 threads the bilayer. Residues R1429–A1447 lie on the Cytoplasmic side of the membrane. A helical membrane pass occupies residues L1448–F1465. Residues G1466–T1487 are Extracellular-facing. An intramembrane region (pore-forming) is located at residues F1488 to P1510. Topologically, residues I1511 to G1540 are extracellular. C1519 and C1534 are joined by a disulfide. Residues I1541–I1563 traverse the membrane as a helical segment. Residues L1564 to V1829 are Cytoplasmic-facing. Positions E1693–S1722 constitute an IQ domain. The disordered stretch occupies residues P1765–T1786.

This sequence belongs to the sodium channel (TC 1.A.1.10) family. Nav1.4/SCN4A subfamily. Voltage-gated sodium (Nav) channels consist of an ion-conducting alpha subunit which is functional on its own associated with regulatory beta subunits. As to expression, expressed in skeletal muscle, brain, spinal cord, and eye.

Its subcellular location is the cell membrane. The catalysed reaction is Na(+)(in) = Na(+)(out). Pore-forming subunit of a voltage-gated sodium (Nav) channel that directly mediates the depolarizing phase of action potentials in excitable membranes. Navs, also called VGSCs (voltage-gated sodium channels) or VDSCs (voltage-dependent sodium channels), operate by switching between closed and open conformations depending on the voltage difference across the membrane. In the open conformation they allow Na(+) ions to selectively pass through the pore, along their electrochemical gradient. The influx of Na+ ions provokes membrane depolarization, initiating the propagation of electrical signals throughout cells and tissues. This Danio rerio (Zebrafish) protein is Sodium channel protein type 4 subunit alpha A (scn4aa).